The chain runs to 137 residues: MLAPKKVKFRKWQKGRLRGPALRGISIAYGDIALKSTEHGKLTSQQIEAARIAMMRHIKRGGKVWIRVFPDHPITAKPLETRQGSGKGSPVGWCAPVKPGRILYEIKGVNIDLAREALIRAAHKLPVKTVIVLKERL.

This sequence belongs to the universal ribosomal protein uL16 family. Part of the 50S ribosomal subunit.

Its function is as follows. Binds 23S rRNA and is also seen to make contacts with the A and possibly P site tRNAs. This is Large ribosomal subunit protein uL16 from Lawsonia intracellularis (strain PHE/MN1-00).